The primary structure comprises 367 residues: Centromere protein L (367 aa).

Belongs to the CENP-L/IML3 family.

It localises to the nucleus. The protein localises to the chromosome. The protein resides in the centromere. Its function is as follows. Probable component of a centromeric complex involved in assembly of kinetochore proteins, mitotic progression and chromosome segregation. This chain is Centromere protein L (cenpl), found in Danio rerio (Zebrafish).